The following is a 247-amino-acid chain: Coproheme decarboxylase (247 aa).

Fe-coproporphyrin III contacts are provided by residues R129, 143–147, H170, Q183, and S221; that span reads YPMDK. Y143 is an active-site residue.

It belongs to the ChdC family. Type 1 subfamily. The cofactor is Fe-coproporphyrin III.

It catalyses the reaction Fe-coproporphyrin III + 2 H2O2 + 2 H(+) = heme b + 2 CO2 + 4 H2O. It carries out the reaction Fe-coproporphyrin III + H2O2 + H(+) = harderoheme III + CO2 + 2 H2O. The enzyme catalyses harderoheme III + H2O2 + H(+) = heme b + CO2 + 2 H2O. It participates in porphyrin-containing compound metabolism; protoheme biosynthesis. Its function is as follows. Involved in coproporphyrin-dependent heme b biosynthesis. Catalyzes the decarboxylation of Fe-coproporphyrin III (coproheme) to heme b (protoheme IX), the last step of the pathway. The reaction occurs in a stepwise manner with a three-propionate intermediate. The polypeptide is Coproheme decarboxylase (Bacillus cytotoxicus (strain DSM 22905 / CIP 110041 / 391-98 / NVH 391-98)).